Here is a 305-residue protein sequence, read N- to C-terminus: MSSNDSNDTDKQHTRLDPTGVDDAYIPPEQPETKHHRFKISRDTLRDHFIAAVGEFCGTFMFLWCAYVICNVANHDVALVAAPDGSHPGQLIMIAIGFGFSVMFSIWCFAGVSGGALNPAMSLSLCLARAVSPTRCVVMWVSQIVAGMAAGGAASAMTPGEVLFANSLGLGCSRTRGLFLEMFGTAILCLTVLMTAVEKRETNFMAALPIGISLFIAHVALTAYTGTGVNPARSLGAAVAARYFPHYHWIYWIGTLLGSILAWSVWQLLQILDYTTYVTAEKAASTKEKAQKKGETSSSSAVAEV.

Residues Met-1 to Lys-34 are disordered. At Met-1–His-48 the chain is on the cytoplasmic side. The chain crosses the membrane as a helical span at residues Phe-49–Ile-69. The Extracellular segment spans residues Cys-70 to Leu-91. A helical membrane pass occupies residues Ile-92 to Val-112. The Cytoplasmic segment spans residues Ser-113 to Cys-136. The NPA 1 signature appears at Asn-118 to Ala-120. Residues Val-137–Met-157 form a helical membrane-spanning segment. At Thr-158 to Arg-176 the chain is on the extracellular side. Residues Gly-177 to Val-197 traverse the membrane as a helical segment. The Cytoplasmic segment spans residues Glu-198–Asn-203. Residues Phe-204–Tyr-224 form a helical membrane-spanning segment. At Thr-225–His-248 the chain is on the extracellular side. The NPA 2 motif lies at Asn-230–Ala-232. The helical transmembrane segment at Trp-249–Leu-269 threads the bilayer. Over Gln-270 to Val-305 the chain is Cytoplasmic. Positions Thr-286–Glu-295 are enriched in basic and acidic residues. The interval Thr-286 to Val-305 is disordered. Positions Thr-296–Val-305 are enriched in polar residues.

The protein belongs to the MIP/aquaporin (TC 1.A.8) family.

Its subcellular location is the endoplasmic reticulum membrane. It is found in the cell membrane. Water channel required to facilitate the transport of water across membranes. Involved in sporulation, freeze tolerance and osmotolerance. Is non-functional in most laboratory strains. This chain is Aquaporin-1 (AQY1), found in Saccharomyces cerevisiae (strain ATCC 204508 / S288c) (Baker's yeast).